The sequence spans 389 residues: Pre-mRNA-splicing factor PRP46 (389 aa).

7 WD repeats span residues Ala83–Val123, Gly126–Gly165, Gly173–Thr212, Gly215–Leu254, Asn257–Gly298, Asp308–Ser347, and Pro356–Tyr389.

Belongs to the WD repeat PRL1/PRL2 family. As to quaternary structure, associated with the spliceosome.

Its subcellular location is the cytoplasm. It is found in the nucleus. Its function is as follows. Involved in pre-mRNA splicing and required for cell cycle progression at G2/M. The chain is Pre-mRNA-splicing factor PRP46 (PRP46) from Candida albicans (strain SC5314 / ATCC MYA-2876) (Yeast).